A 244-amino-acid chain; its full sequence is rRNA adenine N-6-methyltransferase (244 aa).

S-adenosyl-L-methionine is bound by residues Asn-11, Ile-13, Gly-38, Glu-59, Asp-84, and Asn-101.

The protein belongs to the class I-like SAM-binding methyltransferase superfamily. rRNA adenine N(6)-methyltransferase family.

It catalyses the reaction adenosine(2085) in 23S rRNA + 2 S-adenosyl-L-methionine = N(6)-dimethyladenosine(2085) in 23S rRNA + 2 S-adenosyl-L-homocysteine + 2 H(+). Functionally, this protein produces a dimethylation of the adenine residue at position 2085 in 23S rRNA, resulting in reduced affinity between ribosomes and macrolide-lincosamide-streptogramin B antibiotics. This is rRNA adenine N-6-methyltransferase (ermC) from Staphylococcus aureus.